Reading from the N-terminus, the 253-residue chain is Chitooligosaccharide deacetylase (253 aa).

Mg(2+)-binding residues include H61 and H126.

This sequence belongs to the YdjC deacetylase family. ChbG subfamily. In terms of assembly, homodimer. Mg(2+) serves as cofactor.

It is found in the cytoplasm. The enzyme catalyses N,N'-diacetylchitobiose + H2O = N-acetyl-beta-D-glucosaminyl-(1-&gt;4)-D-glucosamine + acetate. It catalyses the reaction diacetylchitobiose-6'-phosphate + H2O = N'-monoacetylchitobiose-6'-phosphate + acetate. Its pathway is glycan degradation; chitin degradation. Functionally, involved in the degradation of chitin. ChbG is essential for growth on the acetylated chitooligosaccharides chitobiose and chitotriose but is dispensable for growth on cellobiose and chitosan dimer, the deacetylated form of chitobiose. Deacetylation of chitobiose-6-P and chitotriose-6-P is necessary for both the activation of the chb promoter by the regulatory protein ChbR and the hydrolysis of phosphorylated beta-glucosides by the phospho-beta-glucosidase ChbF. Catalyzes the removal of only one acetyl group from chitobiose-6-P to yield monoacetylchitobiose-6-P, the inducer of ChbR and the substrate of ChbF. This Yersinia pseudotuberculosis serotype O:1b (strain IP 31758) protein is Chitooligosaccharide deacetylase.